Consider the following 210-residue polypeptide: Probable septum site-determining protein MinC (210 aa).

This sequence belongs to the MinC family. As to quaternary structure, interacts with MinD and FtsZ.

Its function is as follows. Cell division inhibitor that blocks the formation of polar Z ring septums. Rapidly oscillates between the poles of the cell to destabilize FtsZ filaments that have formed before they mature into polar Z rings. Prevents FtsZ polymerization. The protein is Probable septum site-determining protein MinC of Clostridium novyi (strain NT).